A 468-amino-acid polypeptide reads, in one-letter code: Uronate isomerase (468 aa).

The protein belongs to the metallo-dependent hydrolases superfamily. Uronate isomerase family.

The catalysed reaction is D-glucuronate = D-fructuronate. The enzyme catalyses aldehydo-D-galacturonate = keto-D-tagaturonate. The protein operates within carbohydrate metabolism; pentose and glucuronate interconversion. The sequence is that of Uronate isomerase from Bacteroides thetaiotaomicron (strain ATCC 29148 / DSM 2079 / JCM 5827 / CCUG 10774 / NCTC 10582 / VPI-5482 / E50).